The chain runs to 476 residues: Nodulation protein NoeA (476 aa).

Its function is as follows. Not known; does not seem to participate in nod factor synthesis but required for nodulation on some specific Medicago species such as M.littoralis. This Rhizobium meliloti (strain 1021) (Ensifer meliloti) protein is Nodulation protein NoeA (noeA).